Here is a 410-residue protein sequence, read N- to C-terminus: Caspase-1 (410 aa).

The region spanning Met-1–Ser-91 is the CARD domain. Positions Met-1–Pro-119 are excised as a propeptide. Residues Gly-88–Ser-104 are compositionally biased toward polar residues. The interval Gly-88–Glu-125 is disordered. Catalysis depends on residues His-235 and Cys-284. Positions Ser-297–Asp-322 are excised as a propeptide.

The protein belongs to the peptidase C14A family. As to quaternary structure, heterotetramer that consists of two anti-parallel arranged heterodimers, each one formed by a 20 kDa (Caspase-1 subunit p20) and a 10 kDa (Caspase-1 subunit p10) subunit. May be a component of the inflammasome, a protein complex which also includes PYCARD, CARD8 and NLRP2 and whose function would be the activation of pro-inflammatory caspases. Component of the AIM2 PANoptosome complex, a multiprotein complex that drives inflammatory cell death (PANoptosis). Both the p10 and p20 subunits interact with MEFV. Interacts with CARD17P/INCA and CARD18. Interacts with SERPINB1; this interaction regulates CASP1 activity. Heterotetramer that consists of two anti-parallel arranged heterodimers, each one formed by a 20 kDa (Caspase-1 subunit p20) and a 10 kDa (Caspase-1 subunit p10) subunit. The two subunits are derived from the precursor sequence by an autocatalytic mechanism. Post-translationally, ubiquitinated via 'Lys-11'-linked polyubiquitination. Deubiquitinated by USP8.

It localises to the cytoplasm. The protein resides in the cell membrane. The catalysed reaction is Strict requirement for an Asp residue at position P1 and has a preferred cleavage sequence of Tyr-Val-Ala-Asp-|-.. Its function is as follows. Thiol protease involved in a variety of inflammatory processes by proteolytically cleaving other proteins, such as the precursors of the inflammatory cytokines interleukin-1 beta (IL1B) and interleukin 18 (IL18) as well as the pyroptosis inducer Gasdermin-D (GSDMD), into active mature peptides. Plays a key role in cell immunity as an inflammatory response initiator: once activated through formation of an inflammasome complex, it initiates a pro-inflammatory response through the cleavage of the two inflammatory cytokines IL1B and IL18, releasing the mature cytokines which are involved in a variety of inflammatory processes. Cleaves a tetrapeptide after an Asp residue at position P1. Also initiates pyroptosis, a programmed lytic cell death pathway, through cleavage of GSDMD. In contrast to cleavage of interleukin IL1B, recognition and cleavage of GSDMD is not strictly dependent on the consensus cleavage site but depends on an exosite interface on CASP1 that recognizes and binds the Gasdermin-D, C-terminal (GSDMD-CT) part. Cleaves and activates CASP7 in response to bacterial infection, promoting plasma membrane repair. Upon inflammasome activation, during DNA virus infection but not RNA virus challenge, controls antiviral immunity through the cleavage of CGAS, rendering it inactive. In apoptotic cells, cleaves SPHK2 which is released from cells and remains enzymatically active extracellularly. This Felis catus (Cat) protein is Caspase-1 (CASP1).